Here is a 561-residue protein sequence, read N- to C-terminus: Asparagine synthetase [glutamine-hydrolyzing] (561 aa).

C2 serves as the catalytic For GATase activity. The 190-residue stretch at 2–191 (CGIWALFGSD…PGHYEVLDLK (190 aa)) folds into the Glutamine amidotransferase type-2 domain. Residues 49-53 (RLAVV), 75-77 (NGE), and D97 contribute to the L-glutamine site. Residues 213–536 (HALYDSVEKL…PGRADWLTHY (324 aa)) enclose the Asparagine synthetase domain. ATP contacts are provided by residues L256, I288, and 363–364 (SG). K385 carries the N6-acetyllysine modification. T545 is subject to Phosphothreonine. The residue at position 557 (S557) is a Phosphoserine.

The enzyme catalyses L-aspartate + L-glutamine + ATP + H2O = L-asparagine + L-glutamate + AMP + diphosphate + H(+). It functions in the pathway amino-acid biosynthesis; L-asparagine biosynthesis; L-asparagine from L-aspartate (L-Gln route): step 1/1. This is Asparagine synthetase [glutamine-hydrolyzing] (ASNS) from Mesocricetus auratus (Golden hamster).